The primary structure comprises 396 residues: Elongation factor Tu (396 aa).

One can recognise a tr-type G domain in the interval 10-206 (KPHVNIGTIG…AVDSYIPEPV (197 aa)). The G1 stretch occupies residues 19-26 (GHVDHGKT). 19-26 (GHVDHGKT) is a GTP binding site. Mg(2+) is bound at residue threonine 26. A G2 region spans residues 60-64 (GITIA). The segment at 81-84 (DCPG) is G3. GTP-binding positions include 81–85 (DCPGH) and 136–139 (NKAD). The tract at residues 136 to 139 (NKAD) is G4. Residues 174-176 (SAL) form a G5 region.

The protein belongs to the TRAFAC class translation factor GTPase superfamily. Classic translation factor GTPase family. EF-Tu/EF-1A subfamily. As to quaternary structure, monomer.

The protein resides in the cytoplasm. It catalyses the reaction GTP + H2O = GDP + phosphate + H(+). Functionally, GTP hydrolase that promotes the GTP-dependent binding of aminoacyl-tRNA to the A-site of ribosomes during protein biosynthesis. The protein is Elongation factor Tu of Geotalea uraniireducens (strain Rf4) (Geobacter uraniireducens).